The primary structure comprises 432 residues: Glutamyl-tRNA reductase (432 aa).

Substrate contacts are provided by residues 55-58 (TCNR), Ser114, 119-121 (ETQ), and Gln125. The active-site Nucleophile is Cys56. Residue 194–199 (GAGEMI) participates in NADP(+) binding.

It belongs to the glutamyl-tRNA reductase family. In terms of assembly, homodimer.

It carries out the reaction (S)-4-amino-5-oxopentanoate + tRNA(Glu) + NADP(+) = L-glutamyl-tRNA(Glu) + NADPH + H(+). It functions in the pathway porphyrin-containing compound metabolism; protoporphyrin-IX biosynthesis; 5-aminolevulinate from L-glutamyl-tRNA(Glu): step 1/2. In terms of biological role, catalyzes the NADPH-dependent reduction of glutamyl-tRNA(Glu) to glutamate 1-semialdehyde (GSA). The sequence is that of Glutamyl-tRNA reductase from Burkholderia cenocepacia (strain ATCC BAA-245 / DSM 16553 / LMG 16656 / NCTC 13227 / J2315 / CF5610) (Burkholderia cepacia (strain J2315)).